Reading from the N-terminus, the 253-residue chain is Maleate isomerase (253 aa).

Substrate-binding positions include Asn-14, 80–82 (CLV), Tyr-137, and Asn-167. The Nucleophile role is filled by Cys-80. At Cys-80 the chain carries S-(2-succinyl)cysteine. Residue Cys-198 is the Proton donor of the active site. 199 to 200 (VQ) contributes to the substrate binding site.

It belongs to the maleate isomerase family. In terms of assembly, homodimer.

The enzyme catalyses maleate = fumarate. Functionally, catalyzes cis-trans isomerization of the C2-C3 double bond in maleate to yield fumarate. The polypeptide is Maleate isomerase (Alcaligenes faecalis).